Consider the following 153-residue polypeptide: Cornifin-B (153 aa).

Disordered stretches follow at residues 1 to 35 (MSSH…PCVS) and 49 to 85 (CHPK…HPKA). 14 repeat units span residues 27 to 34 (PPPPEPCV), 35 to 42 (SQVKTPCD), 43 to 50 (TKVPEPCH), 51 to 58 (PKAPEPCH), 59 to 66 (PKAPEPCH), 67 to 74 (PKAPEPCH), 75 to 82 (PKAPEPCH), 83 to 90 (PKAPEPCH), 91 to 98 (PKAPEPCH), 99 to 106 (PKAPEPCH), 107 to 114 (PKAPEPCH), 115 to 122 (PKVPEPCL), 123 to 130 (PKAPEPCQ), and 131 to 138 (PIVPEPCP). Positions 27–138 (PPPPEPCVSQ…CQPIVPEPCP (112 aa)) are 14 X 8 AA approximate tandem repeats.

The protein belongs to the cornifin (SPRR) family. In terms of tissue distribution, expressed in fetal periderm, hair follicles and in the thickened epidermis of the lip and footpad. Also present in the epithelia of various tissues such as the penis, vagina, forestomach, tongue and esophagus.

Its subcellular location is the cytoplasm. Functionally, cross-linked envelope protein of keratinocytes. It is a keratinocyte protein that first appears in the cell cytosol, but ultimately becomes cross-linked to membrane proteins by transglutaminase. All that results in the formation of an insoluble envelope beneath the plasma membrane. This is Cornifin-B (Sprr1b) from Mus musculus (Mouse).